Here is a 116-residue protein sequence, read N- to C-terminus: Large ribosomal subunit protein bL19 (116 aa).

Belongs to the bacterial ribosomal protein bL19 family.

Functionally, this protein is located at the 30S-50S ribosomal subunit interface and may play a role in the structure and function of the aminoacyl-tRNA binding site. The sequence is that of Large ribosomal subunit protein bL19 from Clostridium botulinum (strain Eklund 17B / Type B).